The chain runs to 149 residues: Glutamyl-tRNA(Gln) amidotransferase subunit C, mitochondrial (149 aa).

This sequence belongs to the GatC family. As to quaternary structure, subunit of the heterotrimeric GatCAB amidotransferase (AdT) complex, composed of A, B and C subunits.

It is found in the mitochondrion. The enzyme catalyses L-glutamyl-tRNA(Gln) + L-glutamine + ATP + H2O = L-glutaminyl-tRNA(Gln) + L-glutamate + ADP + phosphate + H(+). Functionally, allows the formation of correctly charged Gln-tRNA(Gln) through the transamidation of misacylated Glu-tRNA(Gln) in the mitochondria. The reaction takes place in the presence of glutamine and ATP through an activated gamma-phospho-Glu-tRNA(Gln). This is Glutamyl-tRNA(Gln) amidotransferase subunit C, mitochondrial from Trichoplax adhaerens (Trichoplax reptans).